The following is a 547-amino-acid chain: ATP synthase subunit alpha (547 aa).

172–179 (GDRKTGKT) contributes to the ATP binding site.

Belongs to the ATPase alpha/beta chains family. In terms of assembly, F-type ATPases have 2 components, CF(1) - the catalytic core - and CF(0) - the membrane proton channel. CF(1) has five subunits: alpha(3), beta(3), gamma(1), delta(1), epsilon(1). CF(0) has three main subunits: a(1), b(2) and c(9-12). The alpha and beta chains form an alternating ring which encloses part of the gamma chain. CF(1) is attached to CF(0) by a central stalk formed by the gamma and epsilon chains, while a peripheral stalk is formed by the delta and b chains.

It is found in the cell membrane. It carries out the reaction ATP + H2O + 4 H(+)(in) = ADP + phosphate + 5 H(+)(out). Functionally, produces ATP from ADP in the presence of a proton gradient across the membrane. The alpha chain is a regulatory subunit. The chain is ATP synthase subunit alpha from Rhodococcus erythropolis (strain PR4 / NBRC 100887).